The following is a 255-amino-acid chain: FMR1 neighbor protein (255 aa).

The Cytoplasmic portion of the chain corresponds to 1–68 (MSSHRRKAKG…ESLKMRVSKP (68 aa)). Residues 69-89 (FGMLMLSIWILLFVCYYLSYY) traverse the membrane as a helical segment. The Extracellular portion of the chain corresponds to 90–183 (LCSGSSYFVL…FAPFRDVPKQ (94 aa)). In terms of domain architecture, P-type spans 125 to 184 (LLNFFFPTTCNLRENQVAKPCNELQDLSESECLRHKCCFSSSGTTSFKCFAPFRDVPKQM). A helical transmembrane segment spans residues 184-204 (MMQMFGLGAISLILVCLPIYC). The Cytoplasmic portion of the chain corresponds to 205–255 (RSLFWRSEPADDLQRQDNRVVTGLKKQRRKRKRKSEMLQKAARGREEHGDE). The disordered stretch occupies residues 220–255 (QDNRVVTGLKKQRRKRKRKSEMLQKAARGREEHGDE). Residues 229–238 (KKQRRKRKRK) show a composition bias toward basic residues.

In terms of tissue distribution, testis-specific. Expressed in melanoma, sarcoma, lung, breast, bladder, esophageal and ovarian cancers.

It localises to the membrane. In Homo sapiens (Human), this protein is FMR1 neighbor protein.